The sequence spans 170 residues: Putative pre-16S rRNA nuclease (170 aa).

The segment at 1-29 (MVAASHRSPDRPGDPEGLEPGTGRGRRLG) is disordered.

This sequence belongs to the YqgF nuclease family.

The protein localises to the cytoplasm. Functionally, could be a nuclease involved in processing of the 5'-end of pre-16S rRNA. The polypeptide is Putative pre-16S rRNA nuclease (Mycobacterium ulcerans (strain Agy99)).